A 383-amino-acid polypeptide reads, in one-letter code: Glutamate 5-kinase (383 aa).

An ATP-binding site is contributed by Lys-17. Residues Ser-64, Asp-151, and Asn-165 each coordinate substrate. An ATP-binding site is contributed by 185–186 (SD). Positions 291–367 (SGTIRVDAGA…DEIEGILGYN (77 aa)) constitute a PUA domain.

This sequence belongs to the glutamate 5-kinase family.

The protein resides in the cytoplasm. The enzyme catalyses L-glutamate + ATP = L-glutamyl 5-phosphate + ADP. The protein operates within amino-acid biosynthesis; L-proline biosynthesis; L-glutamate 5-semialdehyde from L-glutamate: step 1/2. In terms of biological role, catalyzes the transfer of a phosphate group to glutamate to form L-glutamate 5-phosphate. The protein is Glutamate 5-kinase of Methanosarcina barkeri (strain Fusaro / DSM 804).